Reading from the N-terminus, the 114-residue chain is Progonadoliberin-2 (114 aa).

An N-terminal signal peptide occupies residues M1–A24. G34 carries the post-translational modification Glycine amide. The tract at residues G35–A59 is disordered.

It belongs to the GnRH family.

It localises to the secreted. Functionally, stimulates the secretion of gonadotropins; it stimulates the secretion of both luteinizing and follicle-stimulating hormones. The protein is Progonadoliberin-2 (GNRH2) of Macaca mulatta (Rhesus macaque).